Reading from the N-terminus, the 341-residue chain is Cytoplasmic tRNA 2-thiolation protein 1 (341 aa).

It belongs to the TtcA family. CTU1/NCS6/ATPBD3 subfamily.

Its subcellular location is the cytoplasm. The protein operates within tRNA modification; 5-methoxycarbonylmethyl-2-thiouridine-tRNA biosynthesis. In terms of biological role, plays a central role in 2-thiolation of mcm(5)S(2)U at tRNA wobble positions of tRNA(Lys), tRNA(Glu) and tRNA(Gln). Directly binds tRNAs and probably acts by catalyzing adenylation of tRNAs, an intermediate required for 2-thiolation. It is unclear whether it acts as a sulfurtransferase that transfers sulfur from thiocarboxylated URM1 onto the uridine of tRNAs at wobble position. This is Cytoplasmic tRNA 2-thiolation protein 1 from Aedes aegypti (Yellowfever mosquito).